Reading from the N-terminus, the 181-residue chain is Crossover junction endodeoxyribonuclease RuvC (181 aa).

Residues D7, E67, and D139 contribute to the active site. Mg(2+) is bound by residues D7, E67, and D139.

The protein belongs to the RuvC family. Homodimer which binds Holliday junction (HJ) DNA. The HJ becomes 2-fold symmetrical on binding to RuvC with unstacked arms; it has a different conformation from HJ DNA in complex with RuvA. In the full resolvosome a probable DNA-RuvA(4)-RuvB(12)-RuvC(2) complex forms which resolves the HJ. Mg(2+) is required as a cofactor.

The protein localises to the cytoplasm. It catalyses the reaction Endonucleolytic cleavage at a junction such as a reciprocal single-stranded crossover between two homologous DNA duplexes (Holliday junction).. In terms of biological role, the RuvA-RuvB-RuvC complex processes Holliday junction (HJ) DNA during genetic recombination and DNA repair. Endonuclease that resolves HJ intermediates. Cleaves cruciform DNA by making single-stranded nicks across the HJ at symmetrical positions within the homologous arms, yielding a 5'-phosphate and a 3'-hydroxyl group; requires a central core of homology in the junction. The consensus cleavage sequence is 5'-(A/T)TT(C/G)-3'. Cleavage occurs on the 3'-side of the TT dinucleotide at the point of strand exchange. HJ branch migration catalyzed by RuvA-RuvB allows RuvC to scan DNA until it finds its consensus sequence, where it cleaves and resolves the cruciform DNA. This Cupriavidus metallidurans (strain ATCC 43123 / DSM 2839 / NBRC 102507 / CH34) (Ralstonia metallidurans) protein is Crossover junction endodeoxyribonuclease RuvC.